The chain runs to 342 residues: MKNITIAIDAMGGDHGLEIVIPACIRAVKNNPDLKLLLVGVQDKISASLKKHGMLSCQQFTIVHASEVVTMDELPSHALRNKKDSSMRIAINLVKEGRAQACVSAGNTGALMATARYVLKTLPGIDRPAIVSELPTMGGKTRVIDLGANVDSCAEHLFQFAVMGSALIQAIENKPKPKIGLLNIGVEEIKGNDQVKRTAHMLAECSVMNYVGYVEGDHFYSGDVDLVVCDGFVGNVALKASEGLAKLLLTVLKESFSRNWLTKIAGLIALPALKHLKNRLDPSRYNGASLLGLNGIVVKSHGGANEVGFQHAIEQAVLEVKNNVVDLVRDQINDFINQGLLL.

Belongs to the PlsX family. Homodimer. Probably interacts with PlsY.

The protein resides in the cytoplasm. The enzyme catalyses a fatty acyl-[ACP] + phosphate = an acyl phosphate + holo-[ACP]. The protein operates within lipid metabolism; phospholipid metabolism. In terms of biological role, catalyzes the reversible formation of acyl-phosphate (acyl-PO(4)) from acyl-[acyl-carrier-protein] (acyl-ACP). This enzyme utilizes acyl-ACP as fatty acyl donor, but not acyl-CoA. The sequence is that of Phosphate acyltransferase from Legionella pneumophila (strain Corby).